The chain runs to 340 residues: Glycerol-3-phosphate dehydrogenase [NAD(P)+] (340 aa).

NADPH-binding residues include S12, W13, and K110. Sn-glycerol 3-phosphate is bound by residues K110, G141, and S143. An NADPH-binding site is contributed by A145. Sn-glycerol 3-phosphate-binding residues include K196, D249, S259, R260, and N261. Catalysis depends on K196, which acts as the Proton acceptor. R260 contributes to the NADPH binding site. The NADPH site is built by V284 and E286.

It belongs to the NAD-dependent glycerol-3-phosphate dehydrogenase family.

It is found in the cytoplasm. The enzyme catalyses sn-glycerol 3-phosphate + NAD(+) = dihydroxyacetone phosphate + NADH + H(+). It catalyses the reaction sn-glycerol 3-phosphate + NADP(+) = dihydroxyacetone phosphate + NADPH + H(+). The protein operates within membrane lipid metabolism; glycerophospholipid metabolism. Its function is as follows. Catalyzes the reduction of the glycolytic intermediate dihydroxyacetone phosphate (DHAP) to sn-glycerol 3-phosphate (G3P), the key precursor for phospholipid synthesis. In Latilactobacillus sakei subsp. sakei (strain 23K) (Lactobacillus sakei subsp. sakei), this protein is Glycerol-3-phosphate dehydrogenase [NAD(P)+].